We begin with the raw amino-acid sequence, 451 residues long: UPF0210 protein CA_C0479 (451 aa).

The protein belongs to the UPF0210 family. In terms of assembly, homodimer.

The sequence is that of UPF0210 protein CA_C0479 from Clostridium acetobutylicum (strain ATCC 824 / DSM 792 / JCM 1419 / IAM 19013 / LMG 5710 / NBRC 13948 / NRRL B-527 / VKM B-1787 / 2291 / W).